The primary structure comprises 456 residues: Frizzled/smoothened-like sans CRD protein F (456 aa).

Positions 1 to 30 (MIFNNLKNQNKIINFLIIFYFLSFLKQIES) are cleaved as a signal peptide. Topologically, residues 31-92 (QSINITSSSS…PFFTINEWNK (62 aa)) are extracellular. 3 N-linked (GlcNAc...) asparagine glycosylation sites follow: Asn34, Asn52, and Asn70. Residues 93-113 (FLNMSLVMGTISFFSGLFLLV) form a helical membrane-spanning segment. Residues 114–127 (TYSPIVNKTHNRHT) are Cytoplasmic-facing. The chain crosses the membrane as a helical span at residues 128 to 148 (IGVMCMSFGVCLAMCSDMWNF). Residues 149 to 174 (GSNFTEKSICPSPGQYLSTSNARCLS) lie on the Extracellular side of the membrane. The N-linked (GlcNAc...) asparagine glycan is linked to Asn151. Residues 175 to 195 (SGIFLQFGGVFGFLNWTLLSF) form a helical membrane-spanning segment. Topologically, residues 196-211 (DLFMNIKGIITKNYDK) are cytoplasmic. A helical transmembrane segment spans residues 212-232 (YYVSGTFIIAIIFTFVPIVND). Topologically, residues 233 to 252 (QYSMSYIGLGCWLGSAMYQL) are extracellular. Residues 253-273 (IFFWILLSICLIVSSVFIILI) form a helical membrane-spanning segment. At 274-297 (LKEVYIIIKLSKQKTSLKGNIRPL) the chain is on the cytoplasmic side. The helical transmembrane segment at 298-318 (ICISITGFAFFYMFFYYISIV) threads the bilayer. The Extracellular segment spans residues 319–354 (VEGDYYERVLNEYTDCLMDPTKDISECKSPRMSVAS). A helical transmembrane segment spans residues 355–375 (EFVFLLCLRLLGIGAFIFYGI). Topologically, residues 376–456 (NNKVKKIWLN…ESSLNSVDEI (81 aa)) are cytoplasmic. A disordered region spans residues 403-422 (ADNDKSNSNGSKVLYRTNNT).

Belongs to the G-protein coupled receptor Fz/Smo family.

It is found in the membrane. The chain is Frizzled/smoothened-like sans CRD protein F (fscF) from Dictyostelium discoideum (Social amoeba).